Reading from the N-terminus, the 246-residue chain is Uridylate kinase (246 aa).

10-13 provides a ligand contact to ATP; sequence KLSG. Gly52 is a binding site for UMP. ATP contacts are provided by Gly53 and Arg57. UMP is bound by residues Asp72 and 133–140; that span reads TGNPFFTT. ATP-binding residues include Thr160, Tyr166, and Asp169.

Belongs to the UMP kinase family. Homohexamer.

The protein resides in the cytoplasm. It catalyses the reaction UMP + ATP = UDP + ADP. The protein operates within pyrimidine metabolism; CTP biosynthesis via de novo pathway; UDP from UMP (UMPK route): step 1/1. With respect to regulation, inhibited by UTP. Catalyzes the reversible phosphorylation of UMP to UDP. This Halorhodospira halophila (strain DSM 244 / SL1) (Ectothiorhodospira halophila (strain DSM 244 / SL1)) protein is Uridylate kinase.